A 258-amino-acid chain; its full sequence is Synapse differentiation-inducing gene protein 1 (258 aa).

Topologically, residues M1 to H181 are cytoplasmic. S137 carries the phosphoserine modification. A helical transmembrane segment spans residues L182–Y202. At L203–F228 the chain is on the extracellular side. The segment at residues L229–I249 is an intramembrane region (helical). Residues A250–L258 are Extracellular-facing.

Belongs to the CD225/Dispanin family. In terms of assembly, homodimer. Interacts with GRIA1 and GRIA2. Brain-specific. Expressed in Purkinje neurons in cerebellum. Also detected in the hippocampus. Found at excitatory synapses and postsynaptic cells.

The protein localises to the cell membrane. The protein resides in the early endosome membrane. Its subcellular location is the postsynaptic density membrane. It is found in the synapse. It localises to the cell projection. The protein localises to the dendrite. The protein resides in the dendritic spine. Its function is as follows. May regulate AMPA receptor content at nascent synapses, and have a role in postsynaptic development and maturation. The protein is Synapse differentiation-inducing gene protein 1 (Syndig1) of Mus musculus (Mouse).